Reading from the N-terminus, the 214-residue chain is Ribosomal RNA small subunit methyltransferase G (214 aa).

S-adenosyl-L-methionine-binding positions include G81, M86, 132-133 (VE), and R147.

Belongs to the methyltransferase superfamily. RNA methyltransferase RsmG family.

Its subcellular location is the cytoplasm. The enzyme catalyses guanosine(527) in 16S rRNA + S-adenosyl-L-methionine = N(7)-methylguanosine(527) in 16S rRNA + S-adenosyl-L-homocysteine. Its function is as follows. Specifically methylates the N7 position of guanine in position 527 of 16S rRNA. This is Ribosomal RNA small subunit methyltransferase G from Pseudomonas fluorescens (strain Pf0-1).